Here is a 381-residue protein sequence, read N- to C-terminus: Creatine kinase B-type (381 aa).

S4 bears the Phosphoserine mark. Residues 11–98 (KLRFPAEDEF…FDPIIEERHG (88 aa)) enclose the Phosphagen kinase N-terminal domain. T35 is modified (phosphothreonine). K45 participates in a covalent cross-link: Glycyl lysine isopeptide (Lys-Gly) (interchain with G-Cter in ubiquitin). Position 72 (V72) interacts with creatine. The span at 96 to 110 (RHGGYQPSDEHKTDL) shows a compositional bias: basic and acidic residues. A disordered region spans residues 96-123 (RHGGYQPSDEHKTDLNPDNLQGGDDLDP). K107 participates in a covalent cross-link: Glycyl lysine isopeptide (Lys-Gly) (interchain with G-Cter in ubiquitin). Phosphotyrosine is present on Y125. The Phosphagen kinase C-terminal domain occupies 125 to 367 (YVLSSRVRTG…KLLIEMEQRL (243 aa)). Residues 128 to 132 (SSRVR), R130, R132, and H191 contribute to the ATP site. The tract at residues 130–138 (RVRTGRSIR) is internal MTS-like signal. S199 bears the Phosphoserine mark. E232 provides a ligand contact to creatine. Residue R236 participates in ATP binding. A 3'-nitrotyrosine modification is found at Y269. Residue S285 coordinates creatine. Position 292 (R292) interacts with ATP. Position 309 is a phosphoserine (S309). Residues R320, 320 to 325 (RGTGGV), and D335 each bind ATP. Phosphothreonine is present on T322. K381 participates in a covalent cross-link: Glycyl lysine isopeptide (Lys-Gly) (interchain with G-Cter in ubiquitin).

Belongs to the ATP:guanido phosphotransferase family. In terms of assembly, dimer of identical or non-identical chains, which can be either B (brain type) or M (muscle type). With MM being the major form in skeletal muscle and myocardium, MB existing in myocardium, and BB existing in many tissues, especially brain. Interacts with SLC12A6 (via C-terminus); the interaction may be required for SLC12A6 potassium-chloride cotransport activity. In terms of processing, ubiquitinated by the ECS(ASB9) complex, leading to its degradation by the proteasome. Expressed in hippocampus and corpus callosum (at protein level).

It localises to the cytoplasm. It is found in the cytosol. Its subcellular location is the mitochondrion. The protein resides in the cell membrane. It carries out the reaction creatine + ATP = N-phosphocreatine + ADP + H(+). Reversibly catalyzes the transfer of phosphate between ATP and various phosphogens (e.g. creatine phosphate). Creatine kinase isoenzymes play a central role in energy transduction in tissues with large, fluctuating energy demands, such as skeletal muscle, heart, brain and spermatozoa. Acts as a key regulator of adaptive thermogenesis as part of the futile creatine cycle: localizes to the mitochondria of thermogenic fat cells and acts by mediating phosphorylation of creatine to initiate a futile cycle of creatine phosphorylation and dephosphorylation. During the futile creatine cycle, creatine and N-phosphocreatine are in a futile cycle, which dissipates the high energy charge of N-phosphocreatine as heat without performing any mechanical or chemical work. This chain is Creatine kinase B-type, found in Mus musculus (Mouse).